The primary structure comprises 503 residues: AMP phosphorylase (503 aa).

Residues glycine 168, 194 to 199 (SRAITS), and threonine 203 contribute to the AMP site. Aspartate 256 serves as the catalytic Proton donor. 2 residues coordinate AMP: serine 264 and lysine 288.

This sequence belongs to the thymidine/pyrimidine-nucleoside phosphorylase family. Type 2 subfamily.

It catalyses the reaction AMP + phosphate = alpha-D-ribose 1,5-bisphosphate + adenine. The catalysed reaction is CMP + phosphate = cytosine + alpha-D-ribose 1,5-bisphosphate. It carries out the reaction UMP + phosphate = alpha-D-ribose 1,5-bisphosphate + uracil. In terms of biological role, catalyzes the conversion of AMP and phosphate to adenine and ribose 1,5-bisphosphate (R15P). Exhibits phosphorylase activity toward CMP and UMP in addition to AMP. Functions in an archaeal AMP degradation pathway, together with R15P isomerase and RubisCO. This Pyrococcus furiosus (strain ATCC 43587 / DSM 3638 / JCM 8422 / Vc1) protein is AMP phosphorylase.